Here is a 225-residue protein sequence, read N- to C-terminus: Alpha-tubulin N-acetyltransferase 1 (225 aa).

One can recognise an N-acetyltransferase domain in the interval 1–190 (MEFPFDVDAL…NNFVIFEGFF (190 aa)). At Lys56 the chain carries N6-acetyllysine; by autocatalysis. Position 124 to 137 (124 to 137 (FYIHESLQRHGHGR)) interacts with acetyl-CoA. Lys146 carries the N6-acetyllysine; by autocatalysis modification. Position 160 to 169 (160 to 169 (SQKLLKFLNK)) interacts with acetyl-CoA. A disordered region spans residues 195–225 (PPARKLPPKRAEGDIKPYSSSDRESGLPQGW). The span at 203–219 (KRAEGDIKPYSSSDRES) shows a compositional bias: basic and acidic residues. Lys210 carries the post-translational modification N6-acetyllysine; by autocatalysis.

The protein belongs to the acetyltransferase ATAT1 family. As to quaternary structure, component of the BBSome complex. Interacts with AP2 alpha-adaptins, including AP2A2, but not with AP1 gamma-adaptin (AP1G1/AP1G2); this interaction is required for efficient alpha-tubulin acetylation, hence clathrin-coated pits are sites of microtubule acetylation. Autoacetylation strongly increases tubulin acetylation.

The protein resides in the cytoplasm. The protein localises to the membrane. It localises to the clathrin-coated pit. It is found in the cell junction. Its subcellular location is the focal adhesion. The protein resides in the cell projection. The protein localises to the axon. It localises to the cytoskeleton. It is found in the spindle. It catalyses the reaction L-lysyl-[alpha-tubulin] + acetyl-CoA = N(6)-acetyl-L-lysyl-[alpha-tubulin] + CoA + H(+). Specifically acetylates 'Lys-40' in alpha-tubulin on the lumenal side of microtubules. Promotes microtubule destabilization and accelerates microtubule dynamics; this activity may be independent of acetylation activity. Acetylates alpha-tubulin with a slow enzymatic rate, due to a catalytic site that is not optimized for acetyl transfer. Enters the microtubule through each end and diffuses quickly throughout the lumen of microtubules. Acetylates only long/old microtubules because of its slow acetylation rate since it does not have time to act on dynamically unstable microtubules before the enzyme is released. Required for normal sperm flagellar function. Promotes directional cell locomotion and chemotaxis, through AP2A2-dependent acetylation of alpha-tubulin at clathrin-coated pits that are concentrated at the leading edge of migrating cells. May facilitate primary cilium assembly. The polypeptide is Alpha-tubulin N-acetyltransferase 1 (Bos taurus (Bovine)).